Consider the following 159-residue polypeptide: MIAIYPGRFDPVTLGHLSVARRASGFCDRLIIAVFDNPAKPGLFTAAERVDFIKQSIKDLPNVEVRSFSGLMVNFARKMGASLIIRGLRVGADFEREMEMYVMNRRLDEGIELCCLFSEPQYQYLSASLIKEIVILGGDSSGLISEHVAVALKNKLASV.

Position 16 (H16) interacts with ATP. Residues K40, M72, and R86 each contribute to the substrate site. ATP-binding positions include G87–R89, E97, and Y122–S128.

This sequence belongs to the bacterial CoaD family. In terms of assembly, homohexamer. Mg(2+) serves as cofactor.

The protein localises to the cytoplasm. It catalyses the reaction (R)-4'-phosphopantetheine + ATP + H(+) = 3'-dephospho-CoA + diphosphate. Its pathway is cofactor biosynthesis; coenzyme A biosynthesis; CoA from (R)-pantothenate: step 4/5. Reversibly transfers an adenylyl group from ATP to 4'-phosphopantetheine, yielding dephospho-CoA (dPCoA) and pyrophosphate. This chain is Phosphopantetheine adenylyltransferase, found in Dehalococcoides mccartyi (strain ATCC BAA-2100 / JCM 16839 / KCTC 5957 / BAV1).